Reading from the N-terminus, the 378-residue chain is Erythronate-4-phosphate dehydrogenase (378 aa).

Substrate is bound by residues Ser-45 and Thr-66. The NAD(+) site is built by Asp-146 and Thr-175. Arg-208 is an active-site residue. Position 232 (Asp-232) interacts with NAD(+). Glu-237 is a catalytic residue. Catalysis depends on His-254, which acts as the Proton donor. Gly-257 serves as a coordination point for NAD(+). Residue Tyr-258 participates in substrate binding.

This sequence belongs to the D-isomer specific 2-hydroxyacid dehydrogenase family. PdxB subfamily. As to quaternary structure, homodimer.

The protein resides in the cytoplasm. The enzyme catalyses 4-phospho-D-erythronate + NAD(+) = (R)-3-hydroxy-2-oxo-4-phosphooxybutanoate + NADH + H(+). Its pathway is cofactor biosynthesis; pyridoxine 5'-phosphate biosynthesis; pyridoxine 5'-phosphate from D-erythrose 4-phosphate: step 2/5. Its function is as follows. Catalyzes the oxidation of erythronate-4-phosphate to 3-hydroxy-2-oxo-4-phosphonooxybutanoate. The polypeptide is Erythronate-4-phosphate dehydrogenase (Cronobacter sakazakii (strain ATCC BAA-894) (Enterobacter sakazakii)).